A 413-amino-acid chain; its full sequence is Serine--tRNA ligase (413 aa).

L-serine is bound at residue threonine 221–glutamate 223. Arginine 252 to glutamate 254 contributes to the ATP binding site. Glutamate 275 is a binding site for L-serine. Glutamate 339–serine 342 contacts ATP. Position 375 (serine 375) interacts with L-serine.

This sequence belongs to the class-II aminoacyl-tRNA synthetase family. Type-1 seryl-tRNA synthetase subfamily. In terms of assembly, homodimer. The tRNA molecule binds across the dimer.

It localises to the cytoplasm. It carries out the reaction tRNA(Ser) + L-serine + ATP = L-seryl-tRNA(Ser) + AMP + diphosphate + H(+). The catalysed reaction is tRNA(Sec) + L-serine + ATP = L-seryl-tRNA(Sec) + AMP + diphosphate + H(+). It participates in aminoacyl-tRNA biosynthesis; selenocysteinyl-tRNA(Sec) biosynthesis; L-seryl-tRNA(Sec) from L-serine and tRNA(Sec): step 1/1. In terms of biological role, catalyzes the attachment of serine to tRNA(Ser). Is also able to aminoacylate tRNA(Sec) with serine, to form the misacylated tRNA L-seryl-tRNA(Sec), which will be further converted into selenocysteinyl-tRNA(Sec). In Dehalococcoides mccartyi (strain ATCC BAA-2266 / KCTC 15142 / 195) (Dehalococcoides ethenogenes (strain 195)), this protein is Serine--tRNA ligase.